The sequence spans 144 residues: Large ribosomal subunit protein uL15 (144 aa).

The interval 1–55 (MQLNELKPVAGSRFKRLRKGRGLSSGHGFTSGRGTKGQKAHGKTRLGFEGGQMPL) is disordered. Over residues 23–35 (LSSGHGFTSGRGT) the composition is skewed to gly residues.

It belongs to the universal ribosomal protein uL15 family. In terms of assembly, part of the 50S ribosomal subunit.

Its function is as follows. Binds to the 23S rRNA. The polypeptide is Large ribosomal subunit protein uL15 (Limosilactobacillus fermentum (strain NBRC 3956 / LMG 18251) (Lactobacillus fermentum)).